The following is a 199-amino-acid chain: Alkyl hydroperoxide reductase C (199 aa).

Residues 2–163 (VLVTYPAPDF…TLRMIDALHF (162 aa)) enclose the Thioredoxin domain. Catalysis depends on C50, which acts as the Cysteine sulfenic acid (-SOH) intermediate.

Belongs to the peroxiredoxin family. AhpC/Prx1 subfamily. In terms of assembly, homodimer; disulfide-linked, upon oxidation. 5 homodimers assemble to form a ring-like decamer.

The protein resides in the cytoplasm. It catalyses the reaction a hydroperoxide + NADH + H(+) = an alcohol + NAD(+) + H2O. Its function is as follows. Thiol-specific peroxidase that catalyzes the reduction of hydrogen peroxide and organic hydroperoxides to water and alcohols, respectively. Plays a role in cell protection against oxidative stress by detoxifying peroxides. The protein is Alkyl hydroperoxide reductase C of Buchnera aphidicola subsp. Baizongia pistaciae (strain Bp).